A 308-amino-acid polypeptide reads, in one-letter code: Homoserine kinase (308 aa).

85–95 is a binding site for ATP; the sequence is PLTRGLGSSAA.

It belongs to the GHMP kinase family. Homoserine kinase subfamily.

Its subcellular location is the cytoplasm. It carries out the reaction L-homoserine + ATP = O-phospho-L-homoserine + ADP + H(+). It participates in amino-acid biosynthesis; L-threonine biosynthesis; L-threonine from L-aspartate: step 4/5. Functionally, catalyzes the ATP-dependent phosphorylation of L-homoserine to L-homoserine phosphate. This Caldicellulosiruptor saccharolyticus (strain ATCC 43494 / DSM 8903 / Tp8T 6331) protein is Homoserine kinase.